We begin with the raw amino-acid sequence, 194 residues long: dTTP/UTP pyrophosphatase (194 aa).

Asp66 (proton acceptor) is an active-site residue.

It belongs to the Maf family. YhdE subfamily. Requires a divalent metal cation as cofactor.

It localises to the cytoplasm. It carries out the reaction dTTP + H2O = dTMP + diphosphate + H(+). The enzyme catalyses UTP + H2O = UMP + diphosphate + H(+). Functionally, nucleoside triphosphate pyrophosphatase that hydrolyzes dTTP and UTP. May have a dual role in cell division arrest and in preventing the incorporation of modified nucleotides into cellular nucleic acids. This chain is dTTP/UTP pyrophosphatase, found in Anaeromyxobacter dehalogenans (strain 2CP-C).